The following is a 238-amino-acid chain: Probable septum site-determining protein MinC (238 aa).

The protein belongs to the MinC family. Interacts with MinD and FtsZ.

Its function is as follows. Cell division inhibitor that blocks the formation of polar Z ring septums. Rapidly oscillates between the poles of the cell to destabilize FtsZ filaments that have formed before they mature into polar Z rings. Prevents FtsZ polymerization. The sequence is that of Probable septum site-determining protein MinC from Xylella fastidiosa (strain M12).